The primary structure comprises 257 residues: 3-deoxy-manno-octulosonate cytidylyltransferase (257 aa).

It belongs to the KdsB family.

The protein localises to the cytoplasm. The catalysed reaction is 3-deoxy-alpha-D-manno-oct-2-ulosonate + CTP = CMP-3-deoxy-beta-D-manno-octulosonate + diphosphate. It participates in nucleotide-sugar biosynthesis; CMP-3-deoxy-D-manno-octulosonate biosynthesis; CMP-3-deoxy-D-manno-octulosonate from 3-deoxy-D-manno-octulosonate and CTP: step 1/1. It functions in the pathway bacterial outer membrane biogenesis; lipopolysaccharide biosynthesis. Its function is as follows. Activates KDO (a required 8-carbon sugar) for incorporation into bacterial lipopolysaccharide in Gram-negative bacteria. The sequence is that of 3-deoxy-manno-octulosonate cytidylyltransferase from Stenotrophomonas maltophilia (strain K279a).